A 468-amino-acid chain; its full sequence is F-box/LRR-repeat protein At4g14096 (468 aa).

The 54-residue stretch at 7-60 (RDIISSLPEAISCHILSFLPTKEAASTSVLSKKWRYLFAFVPNLDLDESVYLNP) folds into the F-box domain. LRR repeat units follow at residues 114–136 (VSDL…MFLS), 138–167 (TLVR…YIDS), 169–194 (YFEK…VLDD), 216–241 (STQV…KFTD), 292–323 (TLYL…TIES), and 324–349 (NPEV…IFQG).

The chain is F-box/LRR-repeat protein At4g14096 from Arabidopsis thaliana (Mouse-ear cress).